A 386-amino-acid polypeptide reads, in one-letter code: Adiponectin receptor protein 2 (386 aa).

The interval Met-1 to Glu-71 is disordered. At Met-1–Gly-147 the chain is on the cytoplasmic side. Residues Pro-15–Asp-41 show a composition bias toward basic and acidic residues. Residues Asn-148–Phe-168 traverse the membrane as a helical segment. Over Arg-169–Lys-181 the chain is Extracellular. The helical transmembrane segment at Val-182–His-202 threads the bilayer. Zn(2+) is bound at residue His-202. Residues Thr-203–Arg-213 lie on the Cytoplasmic side of the membrane. The helical transmembrane segment at Leu-214–Trp-234 threads the bilayer. Residues Leu-235 to Pro-245 are Extracellular-facing. Residues Cys-246–Trp-266 form a helical membrane-spanning segment. Over Asp-267–Gln-273 the chain is Cytoplasmic. Residues Tyr-274–Leu-294 form a helical membrane-spanning segment. The Extracellular portion of the chain corresponds to His-295–Gly-309. Residues Gln-310 to Ala-330 form a helical membrane-spanning segment. At Arg-331–His-348 the chain is on the cytoplasmic side. Residues His-348 and His-352 each coordinate Zn(2+). The helical transmembrane segment at Gln-349 to Leu-369 threads the bilayer. Over Gln-370–Leu-386 the chain is Extracellular.

The protein belongs to the ADIPOR family. As to quaternary structure, may form homooligomers and heterooligomers with ADIPOR1. Interacts with APPL2 (via BAR domain); ADIPOQ dissociates this interaction. As to expression, ubiquitous. Highly expressed in skeletal muscle, liver and placenta. Weakly expressed in brain, heart, colon, spleen, kidney, thymus, small intestine, peripheral blood leukocytes and lung.

The protein localises to the cell membrane. In terms of biological role, receptor for ADIPOQ, an essential hormone secreted by adipocytes that regulates glucose and lipid metabolism. Required for normal body fat and glucose homeostasis. ADIPOQ-binding activates a signaling cascade that leads to increased PPARA activity, and ultimately to increased fatty acid oxidation and glucose uptake. Has intermediate affinity for globular and full-length adiponectin. Required for normal revascularization after chronic ischemia caused by severing of blood vessels. In Homo sapiens (Human), this protein is Adiponectin receptor protein 2.